Reading from the N-terminus, the 555-residue chain is Membrane protein insertase YidC (555 aa).

5 helical membrane passes run 7–24, 367–387, 437–457, 476–496, and 511–531; these read VLWV…DNWQ, WGWS…PLSA, LPVV…LASV, PFFI…SLNP, and PIAF…YYVV.

This sequence belongs to the OXA1/ALB3/YidC family. Type 1 subfamily. Interacts with the Sec translocase complex via SecD. Specifically interacts with transmembrane segments of nascent integral membrane proteins during membrane integration.

The protein resides in the cell inner membrane. Its function is as follows. Required for the insertion and/or proper folding and/or complex formation of integral membrane proteins into the membrane. Involved in integration of membrane proteins that insert both dependently and independently of the Sec translocase complex, as well as at least some lipoproteins. Aids folding of multispanning membrane proteins. In Burkholderia lata (strain ATCC 17760 / DSM 23089 / LMG 22485 / NCIMB 9086 / R18194 / 383), this protein is Membrane protein insertase YidC.